The chain runs to 1009 residues: Lateral signaling target protein 2 homolog (1009 aa).

3 disordered regions span residues 313 to 460, 497 to 629, and 777 to 905; these read PVGS…EEQL, ASED…KRCS, and MQRN…TATA. Low complexity-rich tracts occupy residues 327–348, 364–398, and 406–427; these read SSTPTTSSNNNNNNKSSSSSSG, QRNNNNNQQNSNESTTLPPRSPSMLSLSASSTPTA, and PSHSIASTTSSAASSNSTHPPA. The span at 430-458 shows a compositional bias: acidic residues; it reads SDGDDEDEDEEEDEEEDELEDTEDDTDEE. Serine 541 carries the phosphoserine modification. Over residues 544–558 the composition is skewed to basic and acidic residues; it reads SEPHRDQGETIKSTE. Over residues 562–575 the composition is skewed to low complexity; sequence QQQQQQEQQTLQSS. Basic residues-rich tracts occupy residues 576 to 601 and 609 to 627; these read RQRHSHSHSHSHRHHHRHHHHHHHST and QPHHHQPHPHRLTRSGRKR. The span at 780–798 shows a compositional bias: low complexity; sequence NNTIDNPSSSNTSSSSATT. Serine 807 carries the post-translational modification Phosphoserine. Positions 822–878 are enriched in low complexity; sequence VHQQEQEMQQQQDHQQQQHQHQVQVQLQRQRNNSVGSNTPSSASSTSSSSEQNSPVS. Residues 917-977 form an FYVE-type zinc finger; that stretch reads DGKAPRCMSC…VCRDCYVREV (61 aa). Positions 923, 926, 939, 942, 947, 950, 969, and 972 each coordinate Zn(2+).

The protein belongs to the lst-2 family.

Its function is as follows. Negative regulator of epidermal growth factor receptor (EGFR) signaling. In Drosophila persimilis (Fruit fly), this protein is Lateral signaling target protein 2 homolog.